The following is a 316-amino-acid chain: Transcription termination/antitermination protein NusG (316 aa).

This sequence belongs to the NusG family.

Its function is as follows. Participates in transcription elongation, termination and antitermination. The protein is Transcription termination/antitermination protein NusG of Mycoplasma genitalium (strain ATCC 33530 / DSM 19775 / NCTC 10195 / G37) (Mycoplasmoides genitalium).